The chain runs to 373 residues: Protein-glutamate methylesterase/protein-glutamine glutaminase 2 (373 aa).

The 118-residue stretch at 4 to 121 folds into the Response regulatory domain; it reads KVLVVDDSGF…SRNPEKVKQL (118 aa). Residue Asp-55 is modified to 4-aspartylphosphate. Residues 136–181 form a disordered region; the sequence is FSSYSAPAPQPASAPAPAPSSFASSRSPAPAPAPARAAAPAASANS. Positions 143 to 153 are enriched in pro residues; it reads APQPASAPAPA. Residues 154-181 show a composition bias toward low complexity; the sequence is PSSFASSRSPAPAPAPARAAAPAASANS. Positions 182-370 constitute a CheB-type methylesterase domain; that stretch reads PAPKRKAYKL…LDDIGRHLVE (189 aa). Active-site residues include Ser-197, His-224, and Asp-317.

This sequence belongs to the CheB family. Post-translationally, phosphorylated by CheA. Phosphorylation of the N-terminal regulatory domain activates the methylesterase activity.

The protein resides in the cytoplasm. The catalysed reaction is [protein]-L-glutamate 5-O-methyl ester + H2O = L-glutamyl-[protein] + methanol + H(+). The enzyme catalyses L-glutaminyl-[protein] + H2O = L-glutamyl-[protein] + NH4(+). Its function is as follows. Involved in chemotaxis. Part of a chemotaxis signal transduction system that modulates chemotaxis in response to various stimuli. Catalyzes the demethylation of specific methylglutamate residues introduced into the chemoreceptors (methyl-accepting chemotaxis proteins or MCP) by CheR. Also mediates the irreversible deamidation of specific glutamine residues to glutamic acid. The sequence is that of Protein-glutamate methylesterase/protein-glutamine glutaminase 2 from Pseudomonas fluorescens (strain ATCC BAA-477 / NRRL B-23932 / Pf-5).